A 324-amino-acid chain; its full sequence is Short-chain dehydrogenase/reductase iacJ (324 aa).

Positions 42, 66, 93, 120, 204, 208, and 239 each coordinate NADP(+). The Proton donor role is filled by Y204. Catalysis depends on K208, which acts as the Lowers pKa of active site Tyr.

The protein belongs to the short-chain dehydrogenases/reductases (SDR) family.

It functions in the pathway secondary metabolite biosynthesis. Its function is as follows. Short-chain dehydrogenase/reductase; part of the gene cluster that mediates the biosynthesis of iso-A82775C, a enylepoxycyclohexane and biosynthetic precursor of the chloropestolide anticancer natural products. Within the cluster, the prenyltransferase iacE prenylates siccayne to generate pestalodiol E, using dimethylallyl diphosphate (DMAPP) as cosubstrate. The probable oxidoreductase iacF is then involved in the epoxidation of pestalodiol F to pestalodiol F, which is further converted to pestalofone A by the short-chain dehydrogenase/reductase iacG. Iso-A82775C is subsequently generated from pestalofone A by the short-chain dehydrogenase/reductase iacC. Iso-A82775C is further condensed with maldoxin via a Diels-Alder reaction to produce the anticancer natural products chloropestolides A to E. The chain is Short-chain dehydrogenase/reductase iacJ from Pestalotiopsis fici (strain W106-1 / CGMCC3.15140).